A 67-amino-acid polypeptide reads, in one-letter code: uncharacterized protein (67 aa).

This is an uncharacterized protein from Escherichia coli (strain K12).